A 199-amino-acid polypeptide reads, in one-letter code: NAD(P)H dehydrogenase (quinone) (199 aa).

Residues 4-190 enclose the Flavodoxin-like domain; sequence MLVLYYSAYG…DDARFQGRRV (187 aa). Residues 10-15 and 78-80 each bind FMN; these read SAYGHM and TRY. Tyr12 contacts NAD(+). Trp98 serves as a coordination point for substrate. FMN contacts are provided by residues 113–119 and His134; that span reads STATQHG. The disordered stretch occupies residues 158 to 181; it reads GAPYGMTTTADGDGSRQPSAQELD. Residues 163 to 177 show a composition bias toward polar residues; that stretch reads MTTTADGDGSRQPSA.

Belongs to the WrbA family. It depends on FMN as a cofactor.

It catalyses the reaction a quinone + NADH + H(+) = a quinol + NAD(+). It carries out the reaction a quinone + NADPH + H(+) = a quinol + NADP(+). The sequence is that of NAD(P)H dehydrogenase (quinone) from Brucella ovis (strain ATCC 25840 / 63/290 / NCTC 10512).